A 314-amino-acid chain; its full sequence is Homoserine O-acetyltransferase (314 aa).

Cys142 serves as the catalytic Acyl-thioester intermediate. Residues Lys163 and Ser192 each contribute to the substrate site. The active-site Proton acceptor is His235. Glu237 is an active-site residue. Arg249 provides a ligand contact to substrate.

Belongs to the MetA family.

The protein resides in the cytoplasm. The catalysed reaction is L-homoserine + acetyl-CoA = O-acetyl-L-homoserine + CoA. It functions in the pathway amino-acid biosynthesis; L-methionine biosynthesis via de novo pathway; O-acetyl-L-homoserine from L-homoserine: step 1/1. In terms of biological role, transfers an acetyl group from acetyl-CoA to L-homoserine, forming acetyl-L-homoserine. The sequence is that of Homoserine O-acetyltransferase from Streptococcus thermophilus (strain ATCC BAA-491 / LMD-9).